The chain runs to 139 residues: Cystatin-1 (139 aa).

The signal sequence occupies residues 1–22 (MHSRLPVPASLCLLLLLPSVLP). A Cystatin domain is found at 27–127 (GGLSPRDVTD…CHFEVWSRPW (101 aa)). Residues 71-75 (QVVSG) carry the Secondary area of contact motif. 2 disulfides stabilise this stretch: Cys89–Cys105 and Cys118–Cys138.

The protein belongs to the cystatin family. As to expression, expressed by the venom gland.

Its subcellular location is the secreted. Functionally, inhibits various C1 cysteine proteases including cathepsin L, papain and cathepsin B. This protein has no toxic activity and its function in the venom is unknown. It may play a role as housekeeping or regulatory protein. This chain is Cystatin-1, found in Crotalus adamanteus (Eastern diamondback rattlesnake).